The chain runs to 314 residues: Aryldialkylphosphatase (314 aa).

Fe cation is bound by residues His22, His24, and Lys137. Co(2+) contacts are provided by Lys137, His170, and His199. Lys137 is modified (N6-carboxylysine). Asp256 is a binding site for Fe cation.

It belongs to the metallo-dependent hydrolases superfamily. Phosphotriesterase family. As to quaternary structure, homodimer. Requires Co(2+) as cofactor. It depends on Fe cation as a cofactor.

It catalyses the reaction An aryl dialkyl phosphate + H2O = dialkyl phosphate + an aryl alcohol.. With respect to regulation, inactivated by EDTA and o-phenanthroline. Functionally, has a low paraoxonase activity. Also active, but with a lower activity, against other organo-phosphorus insecticides such as Dursban, Coumaphos, pNP-butanoate or parathion. In Saccharolobus solfataricus (strain ATCC 35092 / DSM 1617 / JCM 11322 / P2) (Sulfolobus solfataricus), this protein is Aryldialkylphosphatase (php).